The primary structure comprises 332 residues: Fructose-1,6-bisphosphatase class 1 (332 aa).

Residues Glu89, Asp110, Leu112, and Asp113 each coordinate Mg(2+). Substrate is bound by residues 113–116 (DGSS), Asn206, Tyr239, 257–259 (YLY), and Lys269. Glu275 is a Mg(2+) binding site.

This sequence belongs to the FBPase class 1 family. Homotetramer. Mg(2+) serves as cofactor.

The protein localises to the cytoplasm. The enzyme catalyses beta-D-fructose 1,6-bisphosphate + H2O = beta-D-fructose 6-phosphate + phosphate. Its pathway is carbohydrate biosynthesis; gluconeogenesis. The chain is Fructose-1,6-bisphosphatase class 1 from Salmonella arizonae (strain ATCC BAA-731 / CDC346-86 / RSK2980).